The chain runs to 223 residues: 2-C-methyl-D-erythritol 4-phosphate cytidylyltransferase (223 aa).

The protein belongs to the IspD/TarI cytidylyltransferase family. IspD subfamily.

The enzyme catalyses 2-C-methyl-D-erythritol 4-phosphate + CTP + H(+) = 4-CDP-2-C-methyl-D-erythritol + diphosphate. It participates in isoprenoid biosynthesis; isopentenyl diphosphate biosynthesis via DXP pathway; isopentenyl diphosphate from 1-deoxy-D-xylulose 5-phosphate: step 2/6. In terms of biological role, catalyzes the formation of 4-diphosphocytidyl-2-C-methyl-D-erythritol from CTP and 2-C-methyl-D-erythritol 4-phosphate (MEP). This is 2-C-methyl-D-erythritol 4-phosphate cytidylyltransferase from Prochlorococcus marinus (strain AS9601).